The sequence spans 92 residues: Small ribosomal subunit protein uS19c (92 aa).

The protein belongs to the universal ribosomal protein uS19 family.

The protein resides in the plastid. It localises to the chloroplast. In terms of biological role, protein S19 forms a complex with S13 that binds strongly to the 16S ribosomal RNA. The sequence is that of Small ribosomal subunit protein uS19c from Calycanthus floridus var. glaucus (Eastern sweetshrub).